Here is a 291-residue protein sequence, read N- to C-terminus: Small ribosomal subunit biogenesis GTPase RsgA (291 aa).

A CP-type G domain is found at 63 to 221 (NNELKRPPVS…IADTPGFSAL (159 aa)). Residues 112–115 (TKHD) and 164–172 (GQSGVGKST) contribute to the GTP site. Cys-245, Cys-250, His-252, and Cys-258 together coordinate Zn(2+).

This sequence belongs to the TRAFAC class YlqF/YawG GTPase family. RsgA subfamily. In terms of assembly, monomer. Associates with 30S ribosomal subunit, binds 16S rRNA. Zn(2+) serves as cofactor.

Its subcellular location is the cytoplasm. Its function is as follows. One of several proteins that assist in the late maturation steps of the functional core of the 30S ribosomal subunit. Helps release RbfA from mature subunits. May play a role in the assembly of ribosomal proteins into the subunit. Circularly permuted GTPase that catalyzes slow GTP hydrolysis, GTPase activity is stimulated by the 30S ribosomal subunit. The polypeptide is Small ribosomal subunit biogenesis GTPase RsgA (Staphylococcus epidermidis (strain ATCC 12228 / FDA PCI 1200)).